Consider the following 952-residue polypeptide: UvrABC system protein A (952 aa).

38 to 45 (GLSGSGKS) provides a ligand contact to ATP. The segment at 258–285 (CNECGFSIPELEPRFFSFNSPVGACKSC) adopts a C4-type zinc-finger fold. 2 consecutive ABC transporter domains span residues 315–596 (FRSV…KKSI) and 616–945 (GNGK…LFLE). An ATP-binding site is contributed by 648–655 (GVSGSGKS). The C4-type zinc finger occupies 747 to 773 (CENCSGDGLIKIEMHFLPDVFVKCESC).

Belongs to the ABC transporter superfamily. UvrA family. As to quaternary structure, forms a heterotetramer with UvrB during the search for lesions.

It is found in the cytoplasm. In terms of biological role, the UvrABC repair system catalyzes the recognition and processing of DNA lesions. UvrA is an ATPase and a DNA-binding protein. A damage recognition complex composed of 2 UvrA and 2 UvrB subunits scans DNA for abnormalities. When the presence of a lesion has been verified by UvrB, the UvrA molecules dissociate. The polypeptide is UvrABC system protein A (Malacoplasma penetrans (strain HF-2) (Mycoplasma penetrans)).